Here is a 410-residue protein sequence, read N- to C-terminus: Arginine deiminase (410 aa).

Cys400 serves as the catalytic Amidino-cysteine intermediate.

It belongs to the arginine deiminase family.

It is found in the cytoplasm. The catalysed reaction is L-arginine + H2O = L-citrulline + NH4(+). It participates in amino-acid degradation; L-arginine degradation via ADI pathway; carbamoyl phosphate from L-arginine: step 1/2. This chain is Arginine deiminase, found in Streptococcus agalactiae serotype Ia (strain ATCC 27591 / A909 / CDC SS700).